The sequence spans 245 residues: tRNA pseudouridine synthase A (245 aa).

The active-site Nucleophile is the Asp-52. Substrate is bound at residue Tyr-111.

It belongs to the tRNA pseudouridine synthase TruA family. Homodimer.

It carries out the reaction uridine(38/39/40) in tRNA = pseudouridine(38/39/40) in tRNA. Functionally, formation of pseudouridine at positions 38, 39 and 40 in the anticodon stem and loop of transfer RNAs. This Rickettsia bellii (strain RML369-C) protein is tRNA pseudouridine synthase A.